Here is a 160-residue protein sequence, read N- to C-terminus: Serine-protein kinase RsbW (160 aa).

Belongs to the anti-sigma-factor family.

The enzyme catalyses L-seryl-[protein] + ATP = O-phospho-L-seryl-[protein] + ADP + H(+). It catalyses the reaction L-threonyl-[protein] + ATP = O-phospho-L-threonyl-[protein] + ADP + H(+). Functionally, negative regulator of sigma-B activity. Phosphorylates and inactivates its specific antagonist protein, RsbV. Upon phosphorylation of RsbV, RsbW is released and binds to sigma-B, thereby blocking its ability to form an RNA polymerase holoenzyme (E-sigma-B). This chain is Serine-protein kinase RsbW, found in Bacillus licheniformis.